A 368-amino-acid polypeptide reads, in one-letter code: Peptide chain release factor 2 (368 aa).

At Q251 the chain carries N5-methylglutamine.

This sequence belongs to the prokaryotic/mitochondrial release factor family. Post-translationally, methylated by PrmC. Methylation increases the termination efficiency of RF2.

The protein localises to the cytoplasm. Functionally, peptide chain release factor 2 directs the termination of translation in response to the peptide chain termination codons UGA and UAA. The polypeptide is Peptide chain release factor 2 (Nitratiruptor sp. (strain SB155-2)).